Consider the following 330-residue polypeptide: Aspartate--ammonia ligase (330 aa).

It belongs to the class-II aminoacyl-tRNA synthetase family. AsnA subfamily.

It localises to the cytoplasm. The catalysed reaction is L-aspartate + NH4(+) + ATP = L-asparagine + AMP + diphosphate + H(+). It participates in amino-acid biosynthesis; L-asparagine biosynthesis; L-asparagine from L-aspartate (ammonia route): step 1/1. The polypeptide is Aspartate--ammonia ligase (Glaesserella parasuis serovar 5 (strain SH0165) (Haemophilus parasuis)).